A 940-amino-acid chain; its full sequence is Isoleucine--tRNA ligase (940 aa).

The 'HIGH' region motif lies at 58 to 68; it reads PYANGSIHIGH. Position 564 (Glu564) interacts with L-isoleucyl-5'-AMP. A 'KMSKS' region motif is present at residues 605-609; that stretch reads KMSKS. An ATP-binding site is contributed by Lys608. Zn(2+) is bound by residues Cys903, Cys906, Cys923, and Cys926.

It belongs to the class-I aminoacyl-tRNA synthetase family. IleS type 1 subfamily. As to quaternary structure, monomer. The cofactor is Zn(2+).

The protein localises to the cytoplasm. It catalyses the reaction tRNA(Ile) + L-isoleucine + ATP = L-isoleucyl-tRNA(Ile) + AMP + diphosphate. Catalyzes the attachment of isoleucine to tRNA(Ile). As IleRS can inadvertently accommodate and process structurally similar amino acids such as valine, to avoid such errors it has two additional distinct tRNA(Ile)-dependent editing activities. One activity is designated as 'pretransfer' editing and involves the hydrolysis of activated Val-AMP. The other activity is designated 'posttransfer' editing and involves deacylation of mischarged Val-tRNA(Ile). In Shewanella baltica (strain OS195), this protein is Isoleucine--tRNA ligase.